The following is a 139-amino-acid chain: MGHRGMGCAHFATMAMPLWALTFYLLVVLPVPSQTASVEVGKEERRLQDLDPKMGSEAGNTDGLSLARFGSRRHQRSTGFGHRVPIISRPVIPIELDLLMDNEDDRTMSKRFDDYGHMRFGKRGGDDQFDDYGHMRFGR.

A signal peptide spans 1-35; it reads MGHRGMGCAHFATMAMPLWALTFYLLVVLPVPSQT. Positions 36-71 are excised as a propeptide; the sequence is ASVEVGKEERRLQDLDPKMGSEAGNTDGLSLARFGS. Position 80 is a phenylalanine amide (Phe-80). A propeptide spanning residues 81–109 is cleaved from the precursor; the sequence is GHRVPIISRPVIPIELDLLMDNEDDRTMS. At Tyr-115 the chain carries Sulfotyrosine. Position 120 is a phenylalanine amide (Phe-120). A Sulfotyrosine modification is found at Tyr-132. A Phenylalanine amide modification is found at Phe-137.

This sequence belongs to the gastrin/cholecystokinin family.

It localises to the secreted. Functionally, drosulfakinin-0 (DSK 0) plays diverse biological roles including regulating gut muscle contraction in adults but not in larvae. The polypeptide is Drosulfakinins (Drosophila pseudoobscura pseudoobscura (Fruit fly)).